The following is a 201-amino-acid chain: Cytochrome c oxidase assembly protein CtaG (201 aa).

Over methionine 1–arginine 13 the chain is Cytoplasmic. Residues serine 14–serine 36 form a helical; Signal-anchor for type II membrane protein membrane-spanning segment. The Periplasmic segment spans residues valine 37–glycine 201.

It belongs to the COX11/CtaG family.

The protein localises to the cell inner membrane. Exerts its effect at some terminal stage of cytochrome c oxidase synthesis, probably by being involved in the insertion of the copper B into subunit I. The chain is Cytochrome c oxidase assembly protein CtaG from Brucella ovis (strain ATCC 25840 / 63/290 / NCTC 10512).